Reading from the N-terminus, the 196-residue chain is Large ribosomal subunit protein uL18 (196 aa).

This sequence belongs to the universal ribosomal protein uL18 family. Part of the 50S ribosomal subunit. Contacts the 5S and 23S rRNAs.

Its function is as follows. This is one of the proteins that bind and probably mediate the attachment of the 5S RNA into the large ribosomal subunit, where it forms part of the central protuberance. The polypeptide is Large ribosomal subunit protein uL18 (Desulfurococcus amylolyticus (strain DSM 18924 / JCM 16383 / VKM B-2413 / 1221n) (Desulfurococcus kamchatkensis)).